Here is a 229-residue protein sequence, read N- to C-terminus: MSQPRPLLSPPETEEQLLAQAQQLSGYTLGELAALAGLVTPENLKRDKGWIGVLLEIWLGASAGSKPEQDFAALGVELKTIPVDSLGRPLETTFVCVAPLTGNSGVTWETSHVRHKLKRVLWIPVEGERSIPLAQRRVGSPLLWSPNEEEDRQLREDWEELMDMIVLGQVERITARHGEYLQIRPKAANAKALTEAIGVRGERILTLPRGFYLKKNFTSALLARHFLIQ.

It belongs to the MutH family.

The protein resides in the cytoplasm. Sequence-specific endonuclease that cleaves unmethylated GATC sequences. It is involved in DNA mismatch repair. This is DNA mismatch repair protein MutH from Escherichia coli (strain SMS-3-5 / SECEC).